A 133-amino-acid chain; its full sequence is Small ribosomal subunit protein uS8 (133 aa).

The protein belongs to the universal ribosomal protein uS8 family. In terms of assembly, part of the 30S ribosomal subunit.

Functionally, one of the primary rRNA binding proteins, it binds directly to 16S rRNA central domain where it helps coordinate assembly of the platform of the 30S subunit. The sequence is that of Small ribosomal subunit protein uS8 from Metallosphaera sedula (strain ATCC 51363 / DSM 5348 / JCM 9185 / NBRC 15509 / TH2).